The sequence spans 380 residues: NADPH quinone oxidoreductase (380 aa).

A mitochondrion-targeting transit peptide spans 1–17; sequence MSSFLSKRFISTTQRAM.

Belongs to the zinc-containing alcohol dehydrogenase family. Quinone oxidoreductase subfamily. As to quaternary structure, homodimer.

It is found in the mitochondrion. It carries out the reaction a quinone + NADH + H(+) = a quinol + NAD(+). It catalyses the reaction a quinone + NADPH + H(+) = a quinol + NADP(+). NADPH quinone oxidoreductase that efficiently reduces 1,4-benzoquinone, whereas no activities are found for menadiones and methoxyquinones. This chain is NADPH quinone oxidoreductase, found in Kluyveromyces marxianus (Yeast).